The sequence spans 272 residues: Hydroxyethylthiazole kinase (272 aa).

Met45 provides a ligand contact to substrate. The ATP site is built by Arg121 and Thr168. Gly195 contributes to the substrate binding site.

Belongs to the Thz kinase family. As to quaternary structure, homotrimer. Requires Mg(2+) as cofactor.

It catalyses the reaction 5-(2-hydroxyethyl)-4-methylthiazole + ATP = 4-methyl-5-(2-phosphooxyethyl)-thiazole + ADP + H(+). Its pathway is cofactor biosynthesis; thiamine diphosphate biosynthesis; 4-methyl-5-(2-phosphoethyl)-thiazole from 5-(2-hydroxyethyl)-4-methylthiazole: step 1/1. Its function is as follows. Catalyzes the phosphorylation of the hydroxyl group of 4-methyl-5-beta-hydroxyethylthiazole (THZ). This Bacillus subtilis (strain 168) protein is Hydroxyethylthiazole kinase.